A 231-amino-acid polypeptide reads, in one-letter code: DNA mismatch repair protein MutH (231 aa).

Belongs to the MutH family.

It is found in the cytoplasm. In terms of biological role, sequence-specific endonuclease that cleaves unmethylated GATC sequences. It is involved in DNA mismatch repair. This is DNA mismatch repair protein MutH from Shewanella woodyi (strain ATCC 51908 / MS32).